The chain runs to 577 residues: External alternative NAD(P)H-ubiquinone oxidoreductase B1, mitochondrial (577 aa).

A mitochondrion-targeting transit peptide spans 1-35 (MRGFTYLSKVLHSHSSYSKLLVLCSVSTGGLLVYA). Position 57-87 (57-87 (RVVVLGTGWGGTSFLKDVDISSYDVQVVSPR)) interacts with FAD. 221–257 (LHFVIVGGGPTGVEFAAELHDYVYEDLVKIYPSVKDF) lines the NAD(+) pocket. Residues 378-413 (KVMEDISAIFKAADKDDSGTLSIEEFRDVLEDIIIR) enclose the EF-hand domain. Positions 391, 393, 395, 397, and 402 each coordinate Ca(2+). Residues 568 to 577 (YIFGRDSSRI) carry the Microbody targeting signal motif.

It belongs to the NADH dehydrogenase family. FAD is required as a cofactor.

The protein resides in the mitochondrion inner membrane. The protein localises to the peroxisome. The enzyme catalyses a quinone + NADH + H(+) = a quinol + NAD(+). It carries out the reaction a ubiquinone + NADH + H(+) = a ubiquinol + NAD(+). Its activity is regulated as follows. Activity is calcium-dependent with a more pronounced effect at higher pH. Alternative NADH-ubiquinone oxidoreductase which catalyzes the oxidation of mitochondrial NADH does not translocate protons across the inner mitochondrial membrane. Calcium-dependent NAD(P)H dehydrogenase. Binds calcium ions. The sequence is that of External alternative NAD(P)H-ubiquinone oxidoreductase B1, mitochondrial (NDB1) from Solanum tuberosum (Potato).